A 493-amino-acid polypeptide reads, in one-letter code: UDP-N-acetylmuramoyl-L-alanyl-D-glutamate--2,6-diaminopimelate ligase (493 aa).

Ser31 provides a ligand contact to UDP-N-acetyl-alpha-D-muramoyl-L-alanyl-D-glutamate. 111 to 117 serves as a coordination point for ATP; sequence GTNGKTT. UDP-N-acetyl-alpha-D-muramoyl-L-alanyl-D-glutamate is bound by residues Asn152, 153–154, Ser180, and Arg188; that span reads TT. Residue Lys220 is modified to N6-carboxylysine. Meso-2,6-diaminopimelate contacts are provided by residues Arg386, 410-413, Gly462, and Glu466; that span reads DNPR. A Meso-diaminopimelate recognition motif motif is present at residues 410-413; the sequence is DNPR.

It belongs to the MurCDEF family. MurE subfamily. Requires Mg(2+) as cofactor. Carboxylation is probably crucial for Mg(2+) binding and, consequently, for the gamma-phosphate positioning of ATP.

Its subcellular location is the cytoplasm. The catalysed reaction is UDP-N-acetyl-alpha-D-muramoyl-L-alanyl-D-glutamate + meso-2,6-diaminopimelate + ATP = UDP-N-acetyl-alpha-D-muramoyl-L-alanyl-gamma-D-glutamyl-meso-2,6-diaminopimelate + ADP + phosphate + H(+). Its pathway is cell wall biogenesis; peptidoglycan biosynthesis. In terms of biological role, catalyzes the addition of meso-diaminopimelic acid to the nucleotide precursor UDP-N-acetylmuramoyl-L-alanyl-D-glutamate (UMAG) in the biosynthesis of bacterial cell-wall peptidoglycan. This is UDP-N-acetylmuramoyl-L-alanyl-D-glutamate--2,6-diaminopimelate ligase (murE1) from Oceanobacillus iheyensis (strain DSM 14371 / CIP 107618 / JCM 11309 / KCTC 3954 / HTE831).